Reading from the N-terminus, the 50-residue chain is Protein PndA (50 aa).

The helical transmembrane segment at 5–25 (TFLMMLIVVCVTILCFVWMVR) threads the bilayer.

The protein belongs to the Hok/Gef family.

The protein localises to the cell inner membrane. When overexpressed kill the cells from the inside by interfering with a vital function in the cell membrane. In terms of biological role, toxic component of a type I toxin-antitoxin (TA) system. When expressed is involved in cellular Mg(2+) release and degradation of stable RNA. This Escherichia coli protein is Protein PndA (pndA).